The sequence spans 370 residues: Aminomethyltransferase (370 aa).

Belongs to the GcvT family. As to quaternary structure, the glycine cleavage system is composed of four proteins: P, T, L and H.

The catalysed reaction is N(6)-[(R)-S(8)-aminomethyldihydrolipoyl]-L-lysyl-[protein] + (6S)-5,6,7,8-tetrahydrofolate = N(6)-[(R)-dihydrolipoyl]-L-lysyl-[protein] + (6R)-5,10-methylene-5,6,7,8-tetrahydrofolate + NH4(+). The glycine cleavage system catalyzes the degradation of glycine. The sequence is that of Aminomethyltransferase from Stenotrophomonas maltophilia (strain R551-3).